Consider the following 752-residue polypeptide: DNA ligase (752 aa).

NAD(+) contacts are provided by residues 48-52, 97-98, and Glu131; these read DADYD and SL. The active-site N6-AMP-lysine intermediate is the Lys133. Positions 154, 189, 305, and 329 each coordinate NAD(+). 4 residues coordinate Zn(2+): Cys434, Cys437, Cys452, and Cys458. Residues 599-615 are compositionally biased toward basic and acidic residues; that stretch reads ADEGRRASLQPQRDKAW. A disordered region spans residues 599–618; the sequence is ADEGRRASLQPQRDKAWADT. The BRCT domain occupies 673–752; it reads ATQSAVAGLT…EQWLDRIGDA (80 aa).

The protein belongs to the NAD-dependent DNA ligase family. LigA subfamily. The cofactor is Mg(2+). It depends on Mn(2+) as a cofactor.

It carries out the reaction NAD(+) + (deoxyribonucleotide)n-3'-hydroxyl + 5'-phospho-(deoxyribonucleotide)m = (deoxyribonucleotide)n+m + AMP + beta-nicotinamide D-nucleotide.. Its function is as follows. DNA ligase that catalyzes the formation of phosphodiester linkages between 5'-phosphoryl and 3'-hydroxyl groups in double-stranded DNA using NAD as a coenzyme and as the energy source for the reaction. It is essential for DNA replication and repair of damaged DNA. In Jannaschia sp. (strain CCS1), this protein is DNA ligase.